Reading from the N-terminus, the 688-residue chain is MAENLVIVESPAKAKTIEKYLGKKYKVIASMGHVRDLPRSQMGVDAENDYEPKYITIRGKGPVVKELKKHAKKAKKVFLASDPDREGEAIAWHLANILNLEDSTENRVVFNEITKDAVKDSFKHPRGIEMELVDAQQARRILDRLVGYNISPVLWKKVKKGLSAGRVQSVALRLVIDRENEIRNFKPEEYWKIEGEFRYKKTKFTAKFLHFKNKPFKLTEKADVEKITTQLDGDQFEVTKVTKKEKTRYPANPFTTSTLQQEAARKLNFKARKTMMLAQQLYEGIDLKKQGTVGLITYMRTDSTRISDQAQSEAKNYIQETYGNDYTSNRKSKGQGDQDAHEAIRPSSTLRTPNEMKNFLTRDQHRLYKLIWERFVASQMAPAILDTVAMDLTQNDIKFRANGQTIKFKGFMTLYVETKDDSEDGKDNKLPNIGEGEMVTATNIEPSQHFTQPPPRYTEARLVKTMEELKIGRPSTYAPTIDTIQKRNYVKNESKRFVPTELGEIVHEQVKDYFPEIIDVDFTVNMETLLDKVADGEIGWKKVISDFYSSFKQDVERAEEEMEKIEIKDEPAGEDCEVCGSPMVIKMGRYGKFMACSNFPDCRNTKAIVKTIGVTCPKCKEGDVVERKSKKNRIFYGCSKYPECDFVTWDKPIGRDCPKCEHYLVEKKQGRKSQVVCSNCDYKEEEQK.

The region spanning 3–113 is the Toprim domain; it reads ENLVIVESPA…TENRVVFNEI (111 aa). 2 residues coordinate Mg(2+): Glu9 and Asp82. A Topo IA-type catalytic domain is found at 129 to 556; sequence EMELVDAQQA…FYSSFKQDVE (428 aa). The interaction with DNA stretch occupies residues 163 to 168; sequence SAGRVQ. The O-(5'-phospho-DNA)-tyrosine intermediate role is filled by Tyr298. The segment at 322–349 is disordered; the sequence is YGNDYTSNRKSKGQGDQDAHEAIRPSST. Residues 334–344 are compositionally biased toward basic and acidic residues; it reads GQGDQDAHEAI. 3 C4-type zinc fingers span residues 576-602, 616-644, and 657-680; these read CEVCGSPMVIKMGRYGKFMACSNFPDC, CPKCKEGDVVERKSKKNRIFYGCSKYPEC, and CPKCEHYLVEKKQGRKSQVVCSNC.

The protein belongs to the type IA topoisomerase family. In terms of assembly, monomer. The cofactor is Mg(2+).

The enzyme catalyses ATP-independent breakage of single-stranded DNA, followed by passage and rejoining.. Its function is as follows. Releases the supercoiling and torsional tension of DNA, which is introduced during the DNA replication and transcription, by transiently cleaving and rejoining one strand of the DNA duplex. Introduces a single-strand break via transesterification at a target site in duplex DNA. The scissile phosphodiester is attacked by the catalytic tyrosine of the enzyme, resulting in the formation of a DNA-(5'-phosphotyrosyl)-enzyme intermediate and the expulsion of a 3'-OH DNA strand. The free DNA strand then undergoes passage around the unbroken strand, thus removing DNA supercoils. Finally, in the religation step, the DNA 3'-OH attacks the covalent intermediate to expel the active-site tyrosine and restore the DNA phosphodiester backbone. This Staphylococcus saprophyticus subsp. saprophyticus (strain ATCC 15305 / DSM 20229 / NCIMB 8711 / NCTC 7292 / S-41) protein is DNA topoisomerase 1.